Here is a 452-residue protein sequence, read N- to C-terminus: 1,3-beta-glucanosyltransferase gel1 (452 aa).

A signal peptide spans 1-19; sequence MKASAVTAALAVGASTVLA. A disulfide bridge links Cys71 with Cys100. (1,3-beta-D-glucosyl)n contacts are provided by Tyr89, Asn159, Glu160, Asp201, and Arg206. The active-site Proton donor is Glu160. 2 disulfides stabilise this stretch: Cys215–Cys345 and Cys233–Cys264. N-linked (GlcNAc...) asparagine glycosylation is present at Asn249. Glu261 serves as the catalytic Nucleophile. A (1,3-beta-D-glucosyl)n-binding site is contributed by Tyr292. Residues 325 to 340 are compositionally biased toward polar residues; sequence EKTSNPSGDGNYNKTG. The interval 325–419 is disordered; it reads EKTSNPSGDG…SGTSTSSKGA (95 aa). An N-linked (GlcNAc...) asparagine glycan is attached at Asn337. The span at 393 to 419 shows a compositional bias: low complexity; sequence STATAEPGSGSATGSSSSGTSTSSKGA. Ala419 is lipidated: GPI-like-anchor amidated alanine. Positions 420-452 are cleaved as a propeptide — removed in mature form; it reads AAGLTVPSLTMAPVVVGAVTLLSTVFGAGLVLL.

It belongs to the glycosyl hydrolase 72 family. The GPI-like anchor contains a phosphoceramide lipid group. The anchor position has not been determined.

It is found in the cell membrane. Splits internally a 1,3-beta-glucan molecule and transfers the newly generated reducing end (the donor) to the non-reducing end of another 1,3-beta-glucan molecule (the acceptor) forming a 1,3-beta linkage, resulting in the elongation of 1,3-beta-glucan chains in the cell wall. Involved in cell wall morphogenesis. The sequence is that of 1,3-beta-glucanosyltransferase gel1 (gel1) from Aspergillus fumigatus (strain CBS 144.89 / FGSC A1163 / CEA10) (Neosartorya fumigata).